The following is a 493-amino-acid chain: Cysteine--tRNA ligase (493 aa).

Cys-31 contributes to the Zn(2+) binding site. Residues 33–43 carry the 'HIGH' region motif; sequence PTVYGDAHLGH. Positions 226, 251, and 255 each coordinate Zn(2+). A 'KMSKS' region motif is present at residues 283–287; it reads KMGKS. Lys-286 lines the ATP pocket.

Belongs to the class-I aminoacyl-tRNA synthetase family. Monomer. Zn(2+) serves as cofactor.

The protein resides in the cytoplasm. It carries out the reaction tRNA(Cys) + L-cysteine + ATP = L-cysteinyl-tRNA(Cys) + AMP + diphosphate. This is Cysteine--tRNA ligase from Phocaeicola vulgatus (strain ATCC 8482 / DSM 1447 / JCM 5826 / CCUG 4940 / NBRC 14291 / NCTC 11154) (Bacteroides vulgatus).